Consider the following 306-residue polypeptide: Porphobilinogen deaminase (306 aa).

The residue at position 240 (Cys-240) is an S-(dipyrrolylmethanemethyl)cysteine.

This sequence belongs to the HMBS family. Monomer. Dipyrromethane is required as a cofactor.

It catalyses the reaction 4 porphobilinogen + H2O = hydroxymethylbilane + 4 NH4(+). It participates in porphyrin-containing compound metabolism; protoporphyrin-IX biosynthesis; coproporphyrinogen-III from 5-aminolevulinate: step 2/4. Its function is as follows. Tetrapolymerization of the monopyrrole PBG into the hydroxymethylbilane pre-uroporphyrinogen in several discrete steps. The protein is Porphobilinogen deaminase of Thiobacillus denitrificans (strain ATCC 25259 / T1).